The following is a 721-amino-acid chain: Kinesin-like protein KIF2C (721 aa).

The segment at 1 to 250 (MESLHARLFP…CSPLTVTDPI (250 aa)) is globular. A phosphoserine mark is found at Ser3 and Ser19. At Ser92 the chain carries Phosphoserine; by AURKB. The Microtubule tip localization signal signature appears at 95–98 (SKIP). A phosphoserine mark is found at Ser106, Ser108, Ser112, Ser162, Ser171, Ser183, and Ser188. The interval 164-188 (EAEEQAHSTRSTSSANPGNSVRRKS) is disordered. Polar residues predominate over residues 171-182 (STRSTSSANPGN). Positions 203 to 234 (EKRAQNSELRIKRAQEYDSSFPNWEFARMIKE) are negative regulator of microtubule-binding. A Kinesin motor domain is found at 254 to 584 (RICVCVRKRP…LRYADRVKEL (331 aa)). ATP contacts are provided by residues Arg260 and 344–351 (GQTGSGKT). Ser515 and Ser626 each carry phosphoserine. Residues 614-652 (GNEEEELSSQMSSFNEAMTQIRELEERALEELREIIQQG) are a coiled coil.

This sequence belongs to the TRAFAC class myosin-kinesin ATPase superfamily. Kinesin family. MCAK/KIF2 subfamily. Interacts with CENPH. Interacts with MTUS2/TIP150; the interaction is direct. Interacts with MAPRE1; the interaction is direct, regulated by phosphorylation and is probably required for targeting to growing microtubule plus ends. Interacts with KIF18B at microtubule tips; this interaction increases the affinity of both partners for microtubule plus ends and is required for robust microtubule depolymerization. Phosphorylation by AURKA or AURKB strongly reduces KIF18B-binding. Phosphorylation by AURKB, regulates association with centromeres and kinetochores and the microtubule depolymerization activity. Post-translationally, ubiquitinated.

The protein resides in the cytoplasm. Its subcellular location is the cytoskeleton. The protein localises to the nucleus. It localises to the chromosome. It is found in the centromere. The protein resides in the kinetochore. Its function is as follows. In complex with KIF18B, constitutes the major microtubule plus-end depolymerizing activity in mitotic cells. Regulates the turnover of microtubules at the kinetochore and functions in chromosome segregation during mitosis. Plays a role in chromosome congression and is required for the lateral to end-on conversion of the chromosome-microtubule attachment. The sequence is that of Kinesin-like protein KIF2C (Kif2c) from Mus musculus (Mouse).